The chain runs to 62 residues: UPF0291 protein CLM_2971 (62 aa).

It belongs to the UPF0291 family.

It localises to the cytoplasm. This Clostridium botulinum (strain Kyoto / Type A2) protein is UPF0291 protein CLM_2971.